The sequence spans 385 residues: 8-amino-7-oxononanoate synthase (385 aa).

A substrate-binding site is contributed by arginine 21. Glycine 108–phenylalanine 109 serves as a coordination point for pyridoxal 5'-phosphate. Position 133 (histidine 133) interacts with substrate. Residues serine 179, histidine 207, and threonine 233 each coordinate pyridoxal 5'-phosphate. An N6-(pyridoxal phosphate)lysine modification is found at lysine 236. A substrate-binding site is contributed by threonine 352.

It belongs to the class-II pyridoxal-phosphate-dependent aminotransferase family. BioF subfamily. As to quaternary structure, homodimer. The cofactor is pyridoxal 5'-phosphate.

It carries out the reaction 6-carboxyhexanoyl-[ACP] + L-alanine + H(+) = (8S)-8-amino-7-oxononanoate + holo-[ACP] + CO2. It participates in cofactor biosynthesis; biotin biosynthesis. Its function is as follows. Catalyzes the decarboxylative condensation of pimeloyl-[acyl-carrier protein] and L-alanine to produce 8-amino-7-oxononanoate (AON), [acyl-carrier protein], and carbon dioxide. The protein is 8-amino-7-oxononanoate synthase of Salmonella schwarzengrund (strain CVM19633).